Reading from the N-terminus, the 392-residue chain is Succinate--CoA ligase [ADP-forming] subunit beta (392 aa).

The ATP-grasp domain occupies 9-248; the sequence is KDILRKFGVA…ISEEDPFEVE (240 aa). ATP-binding positions include lysine 50, 57 to 59, glutamate 103, methionine 106, and glutamate 111; that span reads GRG. Mg(2+) contacts are provided by asparagine 203 and aspartate 217. Residues asparagine 268 and 325-327 each bind substrate; that span reads GIV.

The protein belongs to the succinate/malate CoA ligase beta subunit family. Heterotetramer of two alpha and two beta subunits. Requires Mg(2+) as cofactor.

The catalysed reaction is succinate + ATP + CoA = succinyl-CoA + ADP + phosphate. It carries out the reaction GTP + succinate + CoA = succinyl-CoA + GDP + phosphate. Its pathway is carbohydrate metabolism; tricarboxylic acid cycle; succinate from succinyl-CoA (ligase route): step 1/1. Functionally, succinyl-CoA synthetase functions in the citric acid cycle (TCA), coupling the hydrolysis of succinyl-CoA to the synthesis of either ATP or GTP and thus represents the only step of substrate-level phosphorylation in the TCA. The beta subunit provides nucleotide specificity of the enzyme and binds the substrate succinate, while the binding sites for coenzyme A and phosphate are found in the alpha subunit. The sequence is that of Succinate--CoA ligase [ADP-forming] subunit beta from Chlorobium phaeobacteroides (strain DSM 266 / SMG 266 / 2430).